Reading from the N-terminus, the 154-residue chain is Yop proteins translocation protein O (154 aa).

The tract at residues 132–154 (ELNQQHYQEEQEQEEFLQHHRNA) is disordered.

It belongs to the SpaM family.

Component of the yop secretion machinery. This Yersinia pseudotuberculosis serotype I (strain IP32953) protein is Yop proteins translocation protein O (yscO).